Reading from the N-terminus, the 451-residue chain is UPF0210 protein CA_C0479 (451 aa).

This sequence belongs to the UPF0210 family. As to quaternary structure, homodimer.

In Clostridium acetobutylicum (strain ATCC 824 / DSM 792 / JCM 1419 / IAM 19013 / LMG 5710 / NBRC 13948 / NRRL B-527 / VKM B-1787 / 2291 / W), this protein is UPF0210 protein CA_C0479.